Here is a 68-residue protein sequence, read N- to C-terminus: UPF0253 protein VFMJ11_0680 (68 aa).

Belongs to the UPF0253 family.

In Aliivibrio fischeri (strain MJ11) (Vibrio fischeri), this protein is UPF0253 protein VFMJ11_0680.